Here is a 671-residue protein sequence, read N- to C-terminus: Protein cereblon (671 aa).

Residues 1 to 11 (MDGEEAADIDE) are compositionally biased toward acidic residues. 3 disordered regions span residues 1-59 (MDGE…VDGD), 104-130 (LTGT…PAQP), and 150-187 (GHNV…DAEA). 2 stretches are compositionally biased toward low complexity: residues 39-51 (QQQQ…SSGE) and 105-115 (TGTTTPTPTAP). A compositionally biased stretch (polar residues) spans 162-173 (SISSRHSGSDMS). The Lon N-terminal domain maps to 309-537 (RMLIFMHQHI…IIGSTLKQES (229 aa)). Residues 536–645 (ESLFYCRYCN…LAGSSVRIGK (110 aa)) form the CULT domain. Zn(2+)-binding residues include C541, C544, C610, and C613.

The protein belongs to the CRBN family. Likely a component of a DCX (DDB1-CUL4-X-box) protein ligase complex. May interact with pic/DDB1. In terms of processing, ubiquitinated.

The protein localises to the nucleus. The protein operates within protein modification; protein ubiquitination. Functionally, substrate recognition component of a DCX (DDB1-CUL4-X-box) E3 protein ligase complex that mediates the ubiquitination and subsequent proteasomal degradation of target proteins. Has an essential role in mediating growth by negatively regulating insulin signaling. It also has a role in maintaining presynaptic function in the neuromuscular junction synapses of third-instar larvae. The polypeptide is Protein cereblon (Drosophila grimshawi (Hawaiian fruit fly)).